Here is a 294-residue protein sequence, read N- to C-terminus: MDQYEKVEKIGEGTYGVVYKARDKVTNETIALKKIRLEQEDEGVPSTAIREISLLKEMQHSNIVKLQDVVHSEKRLYLVFEYLDLDLKKHMDSTPDFSKDLHMIKTYLYQILRGIAYCHSHRVLHRDLKPQNLLIDRRTNSLKLADFGLARAFGIPVRTFTHEVVTLWYRAPEILLGSHHYSTPVDIWSVGCIFAEMISQKPLFPGDSEIDQLFKIFRIMGTPYEDTWRGVTSLPDYKSAFPKWKPTDLETFVPNLDPDGVDLLSKMLLMDPTKRINARAALEHEYFKDLGGMP.

The region spanning 4-287 (YEKVEKIGEG…ARAALEHEYF (284 aa)) is the Protein kinase domain. ATP-binding positions include 10–18 (IGEGTYGVV) and K33. Y15 carries the phosphotyrosine modification. D127 acts as the Proton acceptor in catalysis. At T161 the chain carries Phosphothreonine.

Belongs to the protein kinase superfamily. CMGC Ser/Thr protein kinase family. CDC2/CDKX subfamily. In terms of assembly, interacts with CDT1A, CYCA2-3, CYCD2-1, CYCD3-1, CYCD4-1, CYCD4-2, CYCH1-1, CYCU1-1, CYCU2-1, CYCU2-2, CYCU3-1, CYCU4-1, CYCU4-2, CYCU4-3, CKS1, KRP2/ICK2, KRP3/ICK6, KRP4/ICK7, KRP6/ICK4, KRP7/ICK5, and C-terminal domain of KRP1/ICK1. Interacts with WEE1 and TIF4A-1/EIF4A-1. Interacts with PAS2; when phosphorylated at Tyr-15. Interacts with SMR3, SMR4, SMR5, SMR6, SMR8 and At4g14310. Binds to CYCD3-2. Component of a DREAM-like complex which modulates a variety of developmentally regulated genes and of the mitotic genes in proliferating and differentiated cells. Interacts with MYB3R3 at later and with MYB3R4 at earlier stages of leaf development. May interact with SPCH. In terms of processing, phosphorylated at Tyr-15 by WEE1. Phosphorylation at Thr-161 is important for the kinase activity and substrate binding. Binding to the anti-phosphatase PAS2 prevents dephosphorylation. Expressed in roots, stems, flowers and siliques.

The protein localises to the cytoplasm. Its subcellular location is the nucleus. The enzyme catalyses L-seryl-[protein] + ATP = O-phospho-L-seryl-[protein] + ADP + H(+). It carries out the reaction L-threonyl-[protein] + ATP = O-phospho-L-threonyl-[protein] + ADP + H(+). The catalysed reaction is [DNA-directed RNA polymerase] + ATP = phospho-[DNA-directed RNA polymerase] + ADP + H(+). CDK kinase activated by CDKF-1. CDK kinase activity inhibited by KRP1/ICK1, KRP2/ICK2, KRP3/ICK6, KRP4/ICK7, KRP5/ICK3, KRP6/ICK4 and KRP7/ICK5. Down-regulated by phosphorylation by WEE1. In terms of biological role, involved in the control of the cell cycle. Essential for both G1/S and G2/M (mitosis) phase transitions. Functions in cell morphogenesis as well as cell proliferation. Required for cell division (entry into mitosis) of the generative cell in male gametogenesis. Required to trigger guard mother cells (GMC) symmetric divisions at the late stage of stomatal development, probably via the regulation of G1 to S transition in the cell cycle. Required for the function of SPCH in entering the stomatal lineage. Promotes divisions in the guard cells (GCs) after the guard mother cells (GMC) symmetric division when in the presence of CYCD3-2 via the phosphorylation of SPCH. This Arabidopsis thaliana (Mouse-ear cress) protein is Cyclin-dependent kinase A-1.